The sequence spans 157 residues: UPF0262 protein RHECIAT_CH0000657 (157 aa).

It belongs to the UPF0262 family.

The polypeptide is UPF0262 protein RHECIAT_CH0000657 (Rhizobium etli (strain CIAT 652)).